A 255-amino-acid chain; its full sequence is uncharacterized protein (255 aa).

N-linked (GlcNAc...) asparagine; by host glycosylation is found at N16 and N58. Helical transmembrane passes span L72–Y92 and L104–C124.

The protein resides in the membrane. This is an uncharacterized protein from Acanthamoeba polyphaga (Amoeba).